The sequence spans 207 residues: Ribosomal RNA large subunit methyltransferase E (207 aa).

5 residues coordinate S-adenosyl-L-methionine: Gly-56, Trp-58, Asp-76, Asp-94, and Asp-116. The active-site Proton acceptor is the Lys-156.

The protein belongs to the class I-like SAM-binding methyltransferase superfamily. RNA methyltransferase RlmE family.

It localises to the cytoplasm. It carries out the reaction uridine(2552) in 23S rRNA + S-adenosyl-L-methionine = 2'-O-methyluridine(2552) in 23S rRNA + S-adenosyl-L-homocysteine + H(+). Its function is as follows. Specifically methylates the uridine in position 2552 of 23S rRNA at the 2'-O position of the ribose in the fully assembled 50S ribosomal subunit. In Desulfatibacillum aliphaticivorans, this protein is Ribosomal RNA large subunit methyltransferase E.